We begin with the raw amino-acid sequence, 145 residues long: Small ribosomal subunit protein eS19 (145 aa).

The residue at position 23 (K23) is an N6-acetyllysine. R67 is modified (omega-N-methylarginine). K111 and K115 each carry N6-acetyllysine. K143 carries the N6-succinyllysine modification.

The protein belongs to the eukaryotic ribosomal protein eS19 family. Component of the small ribosomal subunit. Part of the small subunit (SSU) processome, composed of more than 70 proteins and the RNA chaperone small nucleolar RNA (snoRNA) U3. Interacts with RPS19BP1; the interaction is direct and mediates the integration of RPS19 in state post-A1. Interacts with RPS19BP1.

Its subcellular location is the cytoplasm. The protein localises to the nucleus. It is found in the nucleolus. Its function is as follows. Component of the small ribosomal subunit. The ribosome is a large ribonucleoprotein complex responsible for the synthesis of proteins in the cell. Required for pre-rRNA processing and maturation of 40S ribosomal subunits. Part of the small subunit (SSU) processome, first precursor of the small eukaryotic ribosomal subunit. During the assembly of the SSU processome in the nucleolus, many ribosome biogenesis factors, an RNA chaperone and ribosomal proteins associate with the nascent pre-rRNA and work in concert to generate RNA folding, modifications, rearrangements and cleavage as well as targeted degradation of pre-ribosomal RNA by the RNA exosome. This chain is Small ribosomal subunit protein eS19 (RPS19), found in Oryctolagus cuniculus (Rabbit).